The primary structure comprises 284 residues: Formamidopyrimidine-DNA glycosylase (284 aa).

The active-site Schiff-base intermediate with DNA is the Pro-2. The active-site Proton donor is the Glu-3. Lys-58 serves as the catalytic Proton donor; for beta-elimination activity. Residues His-101, Arg-120, and Arg-163 each coordinate DNA. The FPG-type zinc-finger motif lies at 248–284; it reads RVYDRENAPCVTAGCPDVVRRVVQSGRSSFYCPSCQR. Arg-274 functions as the Proton donor; for delta-elimination activity in the catalytic mechanism.

This sequence belongs to the FPG family. Monomer. Zn(2+) is required as a cofactor.

The catalysed reaction is Hydrolysis of DNA containing ring-opened 7-methylguanine residues, releasing 2,6-diamino-4-hydroxy-5-(N-methyl)formamidopyrimidine.. It catalyses the reaction 2'-deoxyribonucleotide-(2'-deoxyribose 5'-phosphate)-2'-deoxyribonucleotide-DNA = a 3'-end 2'-deoxyribonucleotide-(2,3-dehydro-2,3-deoxyribose 5'-phosphate)-DNA + a 5'-end 5'-phospho-2'-deoxyribonucleoside-DNA + H(+). In terms of biological role, involved in base excision repair of DNA damaged by oxidation or by mutagenic agents. Acts as a DNA glycosylase that recognizes and removes damaged bases. Has a preference for oxidized purines, such as 7,8-dihydro-8-oxoguanine (8-oxoG). Has AP (apurinic/apyrimidinic) lyase activity and introduces nicks in the DNA strand. Cleaves the DNA backbone by beta-delta elimination to generate a single-strand break at the site of the removed base with both 3'- and 5'-phosphates. The sequence is that of Formamidopyrimidine-DNA glycosylase from Dinoroseobacter shibae (strain DSM 16493 / NCIMB 14021 / DFL 12).